We begin with the raw amino-acid sequence, 95 residues long: Integration host factor subunit beta (95 aa).

It belongs to the bacterial histone-like protein family. As to quaternary structure, heterodimer of an alpha and a beta chain.

In terms of biological role, this protein is one of the two subunits of integration host factor, a specific DNA-binding protein that functions in genetic recombination as well as in transcriptional and translational control. The sequence is that of Integration host factor subunit beta from Klebsiella pneumoniae (strain 342).